We begin with the raw amino-acid sequence, 134 residues long: Protein Turandot E (134 aa).

The first 38 residues, M1–C38, serve as a signal peptide directing secretion.

It belongs to the Turandot family.

It localises to the secreted. Its function is as follows. A humoral factor that may play a role in stress tolerance. The polypeptide is Protein Turandot E (Drosophila melanogaster (Fruit fly)).